Here is a 217-residue protein sequence, read N- to C-terminus: Serine acetyltransferase (217 aa).

It belongs to the transferase hexapeptide repeat family.

The protein localises to the cytoplasm. The enzyme catalyses L-serine + acetyl-CoA = O-acetyl-L-serine + CoA. It participates in amino-acid biosynthesis; L-cysteine biosynthesis; L-cysteine from L-serine: step 1/2. Its activity is regulated as follows. Inhibited by cysteine. Its function is as follows. Catalyzes the acetylation of serine by acetyl-CoA to produce O-acetylserine (OAS). This Bacillus pumilus (strain SAFR-032) protein is Serine acetyltransferase.